The sequence spans 427 residues: Enolase (427 aa).

Q163 serves as a coordination point for (2R)-2-phosphoglycerate. The active-site Proton donor is the E205. Residues D242, E283, and D310 each contribute to the Mg(2+) site. Positions 335, 364, 365, and 386 each coordinate (2R)-2-phosphoglycerate. K335 acts as the Proton acceptor in catalysis.

Belongs to the enolase family. Requires Mg(2+) as cofactor.

Its subcellular location is the cytoplasm. It localises to the secreted. The protein localises to the cell surface. It carries out the reaction (2R)-2-phosphoglycerate = phosphoenolpyruvate + H2O. It participates in carbohydrate degradation; glycolysis; pyruvate from D-glyceraldehyde 3-phosphate: step 4/5. In terms of biological role, catalyzes the reversible conversion of 2-phosphoglycerate (2-PG) into phosphoenolpyruvate (PEP). It is essential for the degradation of carbohydrates via glycolysis. The chain is Enolase from Salinispora arenicola (strain CNS-205).